Consider the following 1214-residue polypeptide: Protein argonaute-2 (1214 aa).

Residues M1–K412 are disordered. Low complexity-rich tracts occupy residues P18–S93 and K107–G117. Composition is skewed to gly residues over residues Q118–G131, Q141–G154, Q164–G177, Q187–G200, Q210–G223, Q233–G246, and Q256–G269. A compositionally biased stretch (low complexity) spans G270–G282. Gly residues-rich tracts occupy residues Q302–G315, Q325–G338, and Q348–G361. Residues G362–P394 show a composition bias toward low complexity. Residues L608–E717 enclose the PAZ domain. The interval Y681–N686 is interaction with guide RNA. Positions L885–T1186 constitute a Piwi domain. Positions 965 and 1037 each coordinate a divalent metal cation. 3 interaction with guide RNA regions span residues K1075–R1076, H1119–K1127, and F1156–R1178. H1173 provides a ligand contact to a divalent metal cation.

This sequence belongs to the argonaute family. Ago subfamily. As to quaternary structure, interacts with Fmr1, Dcr-1 and vig to form the RNA-induced silencing complex (RISC), a ribonucleoprotein (RNP) complex involved in translation regulation, other components of the complex are RpL5, RpL11 and Rm62. As part of the RISC complex, interacts with Tudor-SN. Interacts with Taf11. In terms of assembly, (Microbial infection) Interacts with cricket paralysis virus protein 1A; this interaction may block the RISC activity. Mg(2+) is required as a cofactor. Requires Mn(2+) as cofactor.

It is found in the nucleus. Its subcellular location is the cytoplasm. It localises to the cytoplasmic ribonucleoprotein granule. Its function is as follows. Essential for RNA interference (RNAi); double-stranded RNA induces potent and specific gene silencing. RNAi is mediated by the RNA-induced silencing complex (RISC), a sequence-specific, multicomponent nuclease that destroys or silences messenger RNAs homologous to the silencing trigger. The polypeptide is Protein argonaute-2 (Drosophila melanogaster (Fruit fly)).